Here is a 100-residue protein sequence, read N- to C-terminus: Urease subunit gamma (100 aa).

It belongs to the urease gamma subunit family. As to quaternary structure, heterotrimer of UreA (gamma), UreB (beta) and UreC (alpha) subunits. Three heterotrimers associate to form the active enzyme.

It localises to the cytoplasm. It carries out the reaction urea + 2 H2O + H(+) = hydrogencarbonate + 2 NH4(+). Its pathway is nitrogen metabolism; urea degradation; CO(2) and NH(3) from urea (urease route): step 1/1. The sequence is that of Urease subunit gamma from Mycolicibacterium smegmatis (strain ATCC 700084 / mc(2)155) (Mycobacterium smegmatis).